The chain runs to 269 residues: tRNA pseudouridine synthase A (269 aa).

The Nucleophile role is filled by Asp51. Tyr109 serves as a coordination point for substrate.

This sequence belongs to the tRNA pseudouridine synthase TruA family. Homodimer.

It catalyses the reaction uridine(38/39/40) in tRNA = pseudouridine(38/39/40) in tRNA. Formation of pseudouridine at positions 38, 39 and 40 in the anticodon stem and loop of transfer RNAs. The chain is tRNA pseudouridine synthase A from Haemophilus influenzae (strain ATCC 51907 / DSM 11121 / KW20 / Rd).